Consider the following 437-residue polypeptide: Magnetosome protein MamN (437 aa).

The next 11 membrane-spanning stretches (helical) occupy residues 26–46 (LAVL…GTYT), 53–73 (SIYF…ALLA), 95–115 (WILV…NSLI), 136–156 (VPVI…TMIG), 174–194 (FIGG…LFFE), 229–249 (YGLI…PLKV), 252–268 (GWIA…LGRF), 281–301 (DILF…VGIL), 320–340 (AILL…GTSA), 358–378 (AAWW…LSGA), and 416–436 (WGLP…AVLA).

This sequence belongs to the arsenite-antimonite (ArsB) efflux (TC 2.A.45) family.

The protein resides in the magnetosome membrane. Plays a role in biomineralization; might regulate pH in the magnetosome. The polypeptide is Magnetosome protein MamN (Magnetospirillum gryphiswaldense (strain DSM 6361 / JCM 21280 / NBRC 15271 / MSR-1)).